The chain runs to 865 residues: Protein translocase subunit SecA (865 aa).

Residues glutamine 93, 111–115, and aspartate 501 contribute to the ATP site; that span reads GEGKT. The Zn(2+) site is built by cysteine 841, cysteine 843, cysteine 852, and cysteine 853.

The protein belongs to the SecA family. Monomer and homodimer. Part of the essential Sec protein translocation apparatus which comprises SecA, SecYEG and auxiliary proteins SecDF-YajC and YidC. Requires Zn(2+) as cofactor.

The protein resides in the cell inner membrane. The protein localises to the cytoplasm. It catalyses the reaction ATP + H2O + cellular proteinSide 1 = ADP + phosphate + cellular proteinSide 2.. In terms of biological role, part of the Sec protein translocase complex. Interacts with the SecYEG preprotein conducting channel. Has a central role in coupling the hydrolysis of ATP to the transfer of proteins into and across the cell membrane, serving as an ATP-driven molecular motor driving the stepwise translocation of polypeptide chains across the membrane. In Helicobacter pylori (strain G27), this protein is Protein translocase subunit SecA.